We begin with the raw amino-acid sequence, 64 residues long: MDARLLEILVCPICKGPLHYDRAAQELICNADKLAYPVRDGIPVMLVDEARQTVEGTPVDPSGR.

This sequence belongs to the UPF0434 family.

This is UPF0434 protein Bmul_0750/BMULJ_02510 from Burkholderia multivorans (strain ATCC 17616 / 249).